A 505-amino-acid polypeptide reads, in one-letter code: Glutamate--tRNA ligase (505 aa).

Residues 12–22 carry the 'HIGH' region motif; the sequence is PSPTGDPHVGT. A 'KMSKS' region motif is present at residues 253–257; it reads KLSKR. Lys-256 serves as a coordination point for ATP.

Belongs to the class-I aminoacyl-tRNA synthetase family. Glutamate--tRNA ligase type 1 subfamily. In terms of assembly, monomer.

It is found in the cytoplasm. The enzyme catalyses tRNA(Glu) + L-glutamate + ATP = L-glutamyl-tRNA(Glu) + AMP + diphosphate. Catalyzes the attachment of glutamate to tRNA(Glu) in a two-step reaction: glutamate is first activated by ATP to form Glu-AMP and then transferred to the acceptor end of tRNA(Glu). The protein is Glutamate--tRNA ligase of Chlamydia caviae (strain ATCC VR-813 / DSM 19441 / 03DC25 / GPIC) (Chlamydophila caviae).